The following is a 678-amino-acid chain: MAQNSSLIAAELEALRQTIRAHEYAYYVLEAPNIADSEFDALMQKLRALEAASGLPIPADSPTQRVGGKADNRFRNVAHHIAMLSLDNVFNADEFADFYRRLQEQLSPTTAISLIAEPKFDGLAINLRYENGILQRASTRGDGITGEDVTQNVRTISTIPLRLNTHTPPDVIEIRGEIYMPKKAFYALNEQAAANGEKIFANPRNAASGSLRQLDPRITARRQLAFFAYGYGEITNYQLPETYEALLEQYRAWHIPVCSLHQKAATLPEALAAYQQFAKQREQLPFDIDGVVFKVNRFADQQRAGFLARAPRWAIAWKFPALEKTTRIEAIELQVGRTGAVTPVARLQPVTIAGVVVRSASLHNAREIARKDIRVGDTIFIRRAGDVIPEVVSVVLEKRLPDAPVFAMPEHCPVCAAAIVQNEDEAVARCSGGLHCPAQRVAALIHFASREALDIRGLGEKLIQQLVAQEFVRTPADLFCLTADDWASLPRMGKKSAHNVMTAIDAAKKTTLARFIYALGIRGVGSVNAQALAAHFGDLAAFMAADRAALQEIEGIGDVVAADIEHFFADEDNRAVIAAIVAAGVHWSTELTKKIIDAPLLGKTVVITGTLPSLSRAEAQKRLETLGAKVTSQVSRQTDFLLLGADAGSKLARAQAFSVPIIDEAQLQTWWQHYGNAV.

NAD(+) is bound by residues 36–40, 85–86, and glutamate 117; these read DSEFD and SL. Catalysis depends on lysine 119, which acts as the N6-AMP-lysine intermediate. The NAD(+) site is built by arginine 140, glutamate 177, lysine 294, and lysine 318. Zn(2+)-binding residues include cysteine 412, cysteine 415, cysteine 430, and cysteine 436. Residues 595 to 678 form the BRCT domain; the sequence is IIDAPLLGKT…TWWQHYGNAV (84 aa).

This sequence belongs to the NAD-dependent DNA ligase family. LigA subfamily. The cofactor is Mg(2+). Mn(2+) is required as a cofactor.

The catalysed reaction is NAD(+) + (deoxyribonucleotide)n-3'-hydroxyl + 5'-phospho-(deoxyribonucleotide)m = (deoxyribonucleotide)n+m + AMP + beta-nicotinamide D-nucleotide.. Its function is as follows. DNA ligase that catalyzes the formation of phosphodiester linkages between 5'-phosphoryl and 3'-hydroxyl groups in double-stranded DNA using NAD as a coenzyme and as the energy source for the reaction. It is essential for DNA replication and repair of damaged DNA. The sequence is that of DNA ligase from Dichelobacter nodosus (strain VCS1703A).